The chain runs to 211 residues: ATP-dependent Clp protease proteolytic subunit (211 aa).

Serine 114 serves as the catalytic Nucleophile. Residue histidine 139 is part of the active site.

It belongs to the peptidase S14 family. As to quaternary structure, fourteen ClpP subunits assemble into 2 heptameric rings which stack back to back to give a disk-like structure with a central cavity, resembling the structure of eukaryotic proteasomes.

Its subcellular location is the cytoplasm. It carries out the reaction Hydrolysis of proteins to small peptides in the presence of ATP and magnesium. alpha-casein is the usual test substrate. In the absence of ATP, only oligopeptides shorter than five residues are hydrolyzed (such as succinyl-Leu-Tyr-|-NHMec, and Leu-Tyr-Leu-|-Tyr-Trp, in which cleavage of the -Tyr-|-Leu- and -Tyr-|-Trp bonds also occurs).. Cleaves peptides in various proteins in a process that requires ATP hydrolysis. Has a chymotrypsin-like activity. Plays a major role in the degradation of misfolded proteins. This chain is ATP-dependent Clp protease proteolytic subunit, found in Pseudomonas fluorescens (strain SBW25).